We begin with the raw amino-acid sequence, 52 residues long: Light-harvesting protein B800/830/1020 alpha-1 chain (52 aa).

The Cytoplasmic segment spans residues 1-12 (MWRIWKVFDPRR). Residues 13 to 33 (ILIATAIWLIIIALTIHVILM) form a helical membrane-spanning segment. His-29 lines the a bacteriochlorophyll pocket. Over 34–52 (TTERFNWLEGAPAAEYYSS) the chain is Periplasmic.

The protein belongs to the antenna complex alpha subunit family. As to quaternary structure, the core complex is formed by different alpha and beta chains, binding bacteriochlorophyll molecules, and arranged most probably in tetrameric structures disposed around the reaction center. The non-pigmented gamma chains may constitute additional components.

The protein resides in the cell inner membrane. Its function is as follows. Antenna complexes are light-harvesting systems, which transfer the excitation energy to the reaction centers. The polypeptide is Light-harvesting protein B800/830/1020 alpha-1 chain (Halorhodospira halochloris (Ectothiorhodospira halochloris)).